Consider the following 307-residue polypeptide: Methionyl-tRNA formyltransferase (307 aa).

Residue 108-111 (SLLP) participates in (6S)-5,6,7,8-tetrahydrofolate binding.

It belongs to the Fmt family.

It carries out the reaction L-methionyl-tRNA(fMet) + (6R)-10-formyltetrahydrofolate = N-formyl-L-methionyl-tRNA(fMet) + (6S)-5,6,7,8-tetrahydrofolate + H(+). In terms of biological role, attaches a formyl group to the free amino group of methionyl-tRNA(fMet). The formyl group appears to play a dual role in the initiator identity of N-formylmethionyl-tRNA by promoting its recognition by IF2 and preventing the misappropriation of this tRNA by the elongation apparatus. The polypeptide is Methionyl-tRNA formyltransferase (Xylella fastidiosa (strain 9a5c)).